The following is a 575-amino-acid chain: E3 ubiquitin-protein ligase IpaH1.4 (575 aa).

The segment at 1-270 (MIKSTNIQAI…PDYSGPQIFF (270 aa)) is interaction with target proteins. LRR repeat units lie at residues 69-90 (LQNQEAELNLSELDLKTLPDLP), 91-115 (PQITTLEIRKNLLTHLPDLPPMLKV), 117-130 (HAQFNQLESLPALP), 131-150 (ETLEELNAGDNKIKELPFLP), 151-170 (ENLTHLRVHNNRLHILPLLP), 171-195 (PELKLLVVSGNRLDSIPPFPDKLEG), 197-209 (ALANNFIEQLPEL), and 210-233 (PFSMNRAVLMNNNLTTLPESVLRL). The linker stretch occupies residues 271–281 (SMGNSATISAP). An E3 ubiquitin-protein ligase catalytic domain region spans residues 282-575 (EHSLADAVTA…LSENGSNHIA (294 aa)). The NEL domain occupies 284–575 (SLADAVTAWF…LSENGSNHIA (292 aa)). The Glycyl thioester intermediate role is filled by Cys368.

The protein belongs to the LRR-containing bacterial E3 ligase family. As to quaternary structure, interacts with human RBCK1/HOIL-1 and RNF31/HOIP components of the LUBAC complex. Ubiquitinated in the presence of host E1 ubiquitin-activating enzyme, E2 ubiquitin-conjugating enzyme and ubiquitin.

The protein localises to the secreted. It localises to the host cytoplasm. The enzyme catalyses S-ubiquitinyl-[E2 ubiquitin-conjugating enzyme]-L-cysteine + [acceptor protein]-L-lysine = [E2 ubiquitin-conjugating enzyme]-L-cysteine + N(6)-ubiquitinyl-[acceptor protein]-L-lysine.. The protein operates within protein modification; protein ubiquitination. Its activity is regulated as follows. Exists in an autoinhibited state in the absence of substrate protein, probably due to interactions of the leucine-rich repeat domain with the catalytic domain. Is activated upon binding to a substrate protein. E3 ubiquitin-protein ligase effector that inhibits host cell innate immunity during bacterial infection by catalyzing 'Lys-48'-linked polyubiquitination and subsequent degradation of host RNF31/HOIP and RBCK1/HOIL-1. Host RNF31/HOIP is the catalytic component of the LUBAC complex, which conjugates linear ('Met-1'-linked) polyubiquitin chains at the surface of bacteria invading the host cytosol to form the ubiquitin coat surrounding bacteria. The bacterial ubiquitin coat acts as an 'eat-me' signal for xenophagy and promotes NF-kappa-B activation. By promoting degradation of host RNF31/HOIP, IpaH1.4 prevents formation of the bacterial ubiquitin coat and activation of host cell innate immunity. This is E3 ubiquitin-protein ligase IpaH1.4 from Shigella flexneri.